Reading from the N-terminus, the 851-residue chain is Putative cell signaling protein (851 aa).

Composition is skewed to basic and acidic residues over residues 165–176, 196–223, and 767–781; these read KLNEQDGKKSDN, DQAR…EETK, and SEER…LSHD. 2 disordered regions span residues 165–223 and 714–781; these read KLNE…EETK and DDSE…LSHD.

Post-translationally, palmitoylated.

In Schizosaccharomyces pombe (strain 972 / ATCC 24843) (Fission yeast), this protein is Putative cell signaling protein.